The sequence spans 146 residues: Hemoglobin subunit beta (146 aa).

The residue at position 1 (Val1) is an N-acetylvaline. In terms of domain architecture, Globin spans 2-146 (HLTDAEKNLV…VANALAHKYH (145 aa)). Position 63 (His63) interacts with heme b. Lys82 carries the post-translational modification N6-acetyllysine. Residue His92 coordinates heme b. Cys93 is subject to S-nitrosocysteine. N6-acetyllysine is present on Lys144.

The protein belongs to the globin family. As to quaternary structure, heterotetramer of two alpha chains and two beta chains. As to expression, red blood cells.

In terms of biological role, involved in oxygen transport from the lung to the various peripheral tissues. The protein is Hemoglobin subunit beta (HBB) of Mesocricetus brandti (Brandt's hamster).